We begin with the raw amino-acid sequence, 707 residues long: Choline transporter-like protein 4 (707 aa).

Residues 1-33 are Cytoplasmic-facing; that stretch reads MGGKQDQDKEAYGKPAKYDPSFRGPIRNRSCTD. Residues 34–54 traverse the membrane as a helical segment; that stretch reads IICCVLFFLFILGYIAVGILA. The Extracellular segment spans residues 55 to 227; it reads WVYGDPKQVL…KIFEDFAQSW (173 aa). N-linked (GlcNAc...) asparagine glycosylation is found at Asn-68, Asn-185, and Asn-196. Residues 228–248 traverse the membrane as a helical segment; it reads YWILIALGLALVLSLLFILLL. The Cytoplasmic segment spans residues 249–250; sequence RL. The chain crosses the membrane as a helical span at residues 251 to 271; sequence VAGPLVFVLIIGVLGVLAYGI. At 272–307 the chain is on the extracellular side; that stretch reads YHCWEEYRVLRDKGASISQLGFTTNLSAYRNVQETW. Residue Asn-296 is glycosylated (N-linked (GlcNAc...) asparagine). A helical membrane pass occupies residues 308 to 328; the sequence is LAALIILAVLEGVLLLMLIFL. The Cytoplasmic segment spans residues 329–356; sequence RQRICIAIALLKEASRAVGYIMSTMFYP. A helical transmembrane segment spans residues 357 to 377; it reads LVTFALLLVCIAYWAIIALFL. Residues 378 to 452 are Extracellular-facing; that stretch reads ATSGQPQYVF…AVLGLFWTIN (75 aa). Asn-391, Asn-403, and Asn-413 each carry an N-linked (GlcNAc...) asparagine glycan. A helical membrane pass occupies residues 453 to 473; that stretch reads WVLALGQCVLAGAFASFYWAF. The Cytoplasmic segment spans residues 474 to 498; it reads HKPRDIPTFPLGSAFLRTLRYHTGS. A helical membrane pass occupies residues 499–519; it reads LAFGALILTLVQIARVILEYI. Residues 520-557 are Extracellular-facing; that stretch reads DHKLRGAQNPLTRCILCCFKCCLWCLEKFIKFLNRNAY. A helical membrane pass occupies residues 558–578; it reads IMIAIYGKNFCVSAKNAFMLL. The Cytoplasmic portion of the chain corresponds to 579–594; it reads MRNIVRVVVLDKVTDL. A helical transmembrane segment spans residues 595 to 615; it reads LLFFGKLLVVGGVGVLSFFFF. The Extracellular portion of the chain corresponds to 616–635; sequence TGRIPSLGKTFENPQLNYYW. A helical transmembrane segment spans residues 636 to 656; the sequence is LPIMVSILGAYLIASGFFSVF. Residues 657–707 are Cytoplasmic-facing; it reads GMCVDTLFLCFLEDLERNDGSADRPYYMSKSLLKILGKKNKGTPGDKKRKK.

The protein belongs to the CTL (choline transporter-like) family. N-glycosylated; N-glycosylation of Asn-68 and Asn-391 is required for a proper thiamine pyrophosphate uptake.

It localises to the membrane. Its subcellular location is the apical cell membrane. The enzyme catalyses choline(out) + n H(+)(in) = choline(in) + n H(+)(out). It catalyses the reaction thiamine diphosphate(out) = thiamine diphosphate(in). In terms of biological role, choline transporter that plays a role in the choline-acetylcholine system and is required to the efferent innervation of hair cells in the olivocochlear bundle for the maintenance of physiological function of outer hair cells and the protection of hair cells from acoustic injury. Also described as a thiamine pyrophosphate transporter in colon, may mediate the absorption of microbiota-generated thiamine pyrophosphate and contribute to host thiamine (vitamin B1) homeostasis. In Bos taurus (Bovine), this protein is Choline transporter-like protein 4.